The chain runs to 196 residues: MFPNGLIAFAFGYLLGSIPFGMILTRIAGTQDLRSIGSGNIGATNVLRTGRRGLAAATLLGDMLKGTAAVVIALLLSGPGAAMAATLGAFLGHLFPVWLKFRGGKGVATYIGVLLGLFWPAALAFCAIWLLVAFTTRYSSLSALLASLTTPLLLWGFGHPQFALLFAVLTVLLWFKHRENIRRLFAGSEGRIGAKA.

The next 4 helical transmembrane spans lie at 5 to 25 (GLIAFAFGYLLGSIPFGMILT), 70 to 90 (VVIALLLSGPGAAMAATLGAF), 111 to 131 (IGVLLGLFWPAALAFCAIWLL), and 152 to 172 (LLLWGFGHPQFALLFAVLTVL).

Belongs to the PlsY family. In terms of assembly, probably interacts with PlsX.

It localises to the cell inner membrane. The catalysed reaction is an acyl phosphate + sn-glycerol 3-phosphate = a 1-acyl-sn-glycero-3-phosphate + phosphate. The protein operates within lipid metabolism; phospholipid metabolism. Functionally, catalyzes the transfer of an acyl group from acyl-phosphate (acyl-PO(4)) to glycerol-3-phosphate (G3P) to form lysophosphatidic acid (LPA). This enzyme utilizes acyl-phosphate as fatty acyl donor, but not acyl-CoA or acyl-ACP. The protein is Glycerol-3-phosphate acyltransferase of Nitrobacter winogradskyi (strain ATCC 25391 / DSM 10237 / CIP 104748 / NCIMB 11846 / Nb-255).